The sequence spans 996 residues: GPI ethanolamine phosphate transferase 1 (996 aa).

Topologically, residues 1–8 are cytoplasmic; it reads MAAFPRFR. The chain crosses the membrane as a helical span at residues 9–29; sequence FLAIAVIFHFAYIFSIFDIYF. Over 30–463 the chain is Lumenal; that stretch reads VSPIETGMRL…LQTYDWLFLR (434 aa). 3 N-linked (GlcNAc...) asparagine glycosylation sites follow: Asn-47, Asn-147, and Asn-210. Residues 464–484 traverse the membrane as a helical segment; sequence ALITIGYLGWIAYALTTVVDL. The Cytoplasmic segment spans residues 485–495; the sequence is HVLHGRVRPSR. Residues 496–516 traverse the membrane as a helical segment; that stretch reads TLGGGLFFTSVLVALYASLVI. Topologically, residues 517–518 are lumenal; that stretch reads SK. Residues 519-539 form a helical membrane-spanning segment; that stretch reads SPLTYYVYAFFPVFFWEEVYA. The Cytoplasmic portion of the chain corresponds to 540-560; that stretch reads HRESLAAGRKELLGHINSGGS. The helical transmembrane segment at 561–581 threads the bilayer; sequence VASFVLNSALYVGVIESLALG. At 582-586 the chain is on the lumenal side; the sequence is YIHRE. A helical transmembrane segment spans residues 587 to 607; that stretch reads ILSVLFVLGSFWPFTHGLSFL. The Cytoplasmic portion of the chain corresponds to 608–612; that stretch reads KKHGA. The chain crosses the membrane as a helical span at residues 613 to 633; the sequence is LSATWFLACIAMSTFTLLPAM. Residues 634-637 are Lumenal-facing; it reads KAEN. A helical transmembrane segment spans residues 638-658; sequence VNLITIGGVLMVVIGLLYLIF. The Cytoplasmic segment spans residues 659-681; the sequence is EDFVLADFSWNAKPTSRNHLSRS. Residues 682–702 traverse the membrane as a helical segment; it reads LVGIQVGLTVLSIIITRSSAL. Residues 703–715 lie on the Lumenal side of the membrane; it reads SLQAKQGLPRGNQ. The chain crosses the membrane as a helical span at residues 716-734; that stretch reads IMGWVTLVASLLMPLAYRL. Over 735 to 754 the chain is Cytoplasmic; sequence RPNNHYMHRILVIFLTCAPT. The chain crosses the membrane as a helical span at residues 755–775; sequence FVILTISYEGLFYLVFSALLV. Over 776–822 the chain is Lumenal; the sequence is SWVRLEHAVQKFTSSKAPQTAATKKPTTTTESHLPAPFRPLTLHDAR. A helical membrane pass occupies residues 823 to 843; sequence VALFFFILLQSAFFSTGNVAS. The Cytoplasmic portion of the chain corresponds to 844 to 865; the sequence is VSSFSLDSVYRLIPIFDPFSQG. Residues 866 to 886 traverse the membrane as a helical segment; that stretch reads AMLILKLMIPFALISANLGIL. The Lumenal portion of the chain corresponds to 887 to 895; it reads NKRLGVAPS. The chain crosses the membrane as a helical span at residues 896-916; sequence ALFMVVMGISDILTLYFFWVV. Topologically, residues 917-932 are cytoplasmic; it reads KDEGSWLEIGSTISHF. A helical membrane pass occupies residues 933–953; that stretch reads VIASLLCVFVSALEPVSAAFI. The Lumenal portion of the chain corresponds to 954–996; that stretch reads AGVEVGEESELKEEGKVAEKVVEKVNEAVEGLVSGGDGGGDES.

Belongs to the PIGG/PIGN/PIGO family. PIGN subfamily.

The protein localises to the endoplasmic reticulum membrane. It functions in the pathway glycolipid biosynthesis; glycosylphosphatidylinositol-anchor biosynthesis. In terms of biological role, ethanolamine phosphate transferase involved in glycosylphosphatidylinositol-anchor biosynthesis. Transfers ethanolamine phosphate to the first alpha-1,4-linked mannose of the glycosylphosphatidylinositol precursor of GPI-anchor. In Neurospora crassa (strain ATCC 24698 / 74-OR23-1A / CBS 708.71 / DSM 1257 / FGSC 987), this protein is GPI ethanolamine phosphate transferase 1 (mcd-4).